We begin with the raw amino-acid sequence, 586 residues long: Phosphomethylpyrimidine synthase (586 aa).

The tract at residues 1–58 (MKQSVSAEQIELKSSLPGSKKVYVDGPREGMKVPMREIEQSDTNGVPNPPIRVYDTSG) is disordered. Over residues 22 to 39 (VYVDGPREGMKVPMREIE) the composition is skewed to basic and acidic residues. Residues Asn-193, Met-222, Tyr-251, His-287, 307–309 (SRG), 348–351 (DGLR), and Glu-387 contribute to the substrate site. Zn(2+) is bound at residue His-391. Tyr-414 is a binding site for substrate. His-455 serves as a coordination point for Zn(2+). [4Fe-4S] cluster contacts are provided by Cys-535, Cys-538, and Cys-543.

Belongs to the ThiC family. Requires [4Fe-4S] cluster as cofactor.

It catalyses the reaction 5-amino-1-(5-phospho-beta-D-ribosyl)imidazole + S-adenosyl-L-methionine = 4-amino-2-methyl-5-(phosphooxymethyl)pyrimidine + CO + 5'-deoxyadenosine + formate + L-methionine + 3 H(+). It participates in cofactor biosynthesis; thiamine diphosphate biosynthesis. Catalyzes the synthesis of the hydroxymethylpyrimidine phosphate (HMP-P) moiety of thiamine from aminoimidazole ribotide (AIR) in a radical S-adenosyl-L-methionine (SAM)-dependent reaction. In Bacillus thuringiensis (strain Al Hakam), this protein is Phosphomethylpyrimidine synthase.